Consider the following 89-residue polypeptide: Small ribosomal subunit protein uS15 (89 aa).

The protein belongs to the universal ribosomal protein uS15 family. As to quaternary structure, part of the 30S ribosomal subunit. Forms a bridge to the 50S subunit in the 70S ribosome, contacting the 23S rRNA.

One of the primary rRNA binding proteins, it binds directly to 16S rRNA where it helps nucleate assembly of the platform of the 30S subunit by binding and bridging several RNA helices of the 16S rRNA. Functionally, forms an intersubunit bridge (bridge B4) with the 23S rRNA of the 50S subunit in the ribosome. This chain is Small ribosomal subunit protein uS15, found in Rhizobium leguminosarum bv. trifolii (strain WSM2304).